The sequence spans 79 residues: D-alanyl carrier protein (79 aa).

One can recognise a Carrier domain in the interval 1-77 (MDIKSEVLAI…KIVAGVTELC (77 aa)). Serine 35 is subject to O-(pantetheine 4'-phosphoryl)serine.

The protein belongs to the DltC family. In terms of processing, 4'-phosphopantetheine is transferred from CoA to a specific serine of apo-DCP.

The protein resides in the cytoplasm. Its pathway is cell wall biogenesis; lipoteichoic acid biosynthesis. In terms of biological role, carrier protein involved in the D-alanylation of lipoteichoic acid (LTA). The loading of thioester-linked D-alanine onto DltC is catalyzed by D-alanine--D-alanyl carrier protein ligase DltA. The DltC-carried D-alanyl group is further transferred to cell membrane phosphatidylglycerol (PG) by forming an ester bond, probably catalyzed by DltD. D-alanylation of LTA plays an important role in modulating the properties of the cell wall in Gram-positive bacteria, influencing the net charge of the cell wall. This Streptococcus agalactiae serotype Ia (strain ATCC 27591 / A909 / CDC SS700) protein is D-alanyl carrier protein.